A 126-amino-acid polypeptide reads, in one-letter code: Aspartate 1-decarboxylase (126 aa).

Catalysis depends on S25, which acts as the Schiff-base intermediate with substrate; via pyruvic acid. Position 25 is a pyruvic acid (Ser) (S25). Residue T57 coordinates substrate. The active-site Proton donor is Y58. Residue 73-75 coordinates substrate; it reads GAA.

It belongs to the PanD family. Heterooctamer of four alpha and four beta subunits. The cofactor is pyruvate. Post-translationally, is synthesized initially as an inactive proenzyme, which is activated by self-cleavage at a specific serine bond to produce a beta-subunit with a hydroxyl group at its C-terminus and an alpha-subunit with a pyruvoyl group at its N-terminus.

It localises to the cytoplasm. It catalyses the reaction L-aspartate + H(+) = beta-alanine + CO2. It functions in the pathway cofactor biosynthesis; (R)-pantothenate biosynthesis; beta-alanine from L-aspartate: step 1/1. Catalyzes the pyruvoyl-dependent decarboxylation of aspartate to produce beta-alanine. In Alkalilimnicola ehrlichii (strain ATCC BAA-1101 / DSM 17681 / MLHE-1), this protein is Aspartate 1-decarboxylase.